The sequence spans 475 residues: Beta-amyrin 6-beta-monooxygenase (475 aa).

A helical membrane pass occupies residues 6 to 22; sequence LYSLAFALVYISLYFIF. Position 423 (C423) interacts with heme.

It belongs to the cytochrome P450 family. Requires heme as cofactor. Specifically expressed in roots.

It is found in the membrane. It carries out the reaction beta-amyrin + reduced [NADPH--hemoprotein reductase] + O2 = daturadiol + oxidized [NADPH--hemoprotein reductase] + H2O + H(+). Catalyzes the C-6 beta-hydroxylation of beta-amyrin to form daturadiol. Catalyzes the C-6 beta-hydroxylation of alpha-amyrin to form 6-beta-hydroxy-alpha-amyrin. This chain is Beta-amyrin 6-beta-monooxygenase, found in Solanum lycopersicum (Tomato).